We begin with the raw amino-acid sequence, 29 residues long: Dermaseptin-J9 (29 aa).

As to expression, expressed by the skin glands.

It localises to the secreted. Its function is as follows. Has antimicrobial activity. This chain is Dermaseptin-J9, found in Phasmahyla jandaia (Jandaia leaf frog).